The chain runs to 292 residues: NAD kinase (292 aa).

D73 serves as the catalytic Proton acceptor. Residues D73–G74, N147–E148, H158, R175, D177, T188–S193, and Q247 each bind NAD(+).

Belongs to the NAD kinase family. Requires a divalent metal cation as cofactor.

It is found in the cytoplasm. The catalysed reaction is NAD(+) + ATP = ADP + NADP(+) + H(+). In terms of biological role, involved in the regulation of the intracellular balance of NAD and NADP, and is a key enzyme in the biosynthesis of NADP. Catalyzes specifically the phosphorylation on 2'-hydroxyl of the adenosine moiety of NAD to yield NADP. The protein is NAD kinase of Escherichia coli (strain UTI89 / UPEC).